The sequence spans 423 residues: Ankyrin repeat and SAM domain-containing protein 4B (423 aa).

Residues 1-251 (MSTRYHQAAS…PKDFKEKLHF (251 aa)) form a mediates localization to microvilli region. ANK repeat units lie at residues 31 to 60 (DGMTPTLLAAYHGNLEALEIICSRGGDPDK), 64 to 93 (WGNTPLHYAASNGHTHCISFLVNFGANIFA), and 97 to 126 (DLKSPLDAAASREQKECVALLDKAATVQNT). Residues 130–169 (KRVTRLKEQALKNARKQMKECERLQERHQNKMARTYSKED) are a coiled coil. Disordered stretches follow at residues 158-181 (QNKMARTYSKEDSGTISSSHSTLS), 207-227 (KSKKNKDTTEQLEKDGRSGQR), and 303-335 (QRQGAAGTVEEEEEEEEEEEEEKREANGTAGDL). The span at 171-181 (GTISSSHSTLS) shows a compositional bias: low complexity. Over residues 207 to 224 (KSKKNKDTTEQLEKDGRS) the composition is skewed to basic and acidic residues. Residues 253 to 352 (VEEDDDVQHE…EWEEDAVDAT (100 aa)) form a mediates interaction with MYO7B region. Positions 301 to 335 (LFQRQGAAGTVEEEEEEEEEEEEEKREANGTAGDL) form a coiled coil. The segment covering 311–324 (VEEEEEEEEEEEEE) has biased composition (acidic residues). The 53-residue stretch at 357–409 (FLQSQHLEEFLPIFMREQIDLEALLLCSDEDLQNIHMQLGPRKKVLSAIDKRK) folds into the SAM domain. Residues 421–423 (TSL) carry the PDZ-binding; mediates interaction with USH1C motif.

Part of the IMAC/intermicrovillar adhesion complex/intermicrovillar tip-link complex composed of ANKS4B, MYO7B, USH1C, CDHR2 and CDHR5. Interacts with USH1C; the interaction is direct and is required for ANKS4B localization to the tip of microvilli. Interacts with MYO7B; the interaction is direct. May interact with HSPA5. As to expression, cochlea, kidney, lung, liver, pancreas, salivary gland and small intestine (at protein level). Expressed in kidney, small intestine, pancreas, liver and colon. Not detected in heart, spleen and brain.

It localises to the cell projection. The protein resides in the microvillus. Functionally, as part of the intermicrovillar adhesion complex/IMAC plays a role in epithelial brush border differentiation, controlling microvilli organization and length. Plays a role in assembly of the complex. May play a role in cellular response to endoplasmic reticulum stress. The protein is Ankyrin repeat and SAM domain-containing protein 4B of Mus musculus (Mouse).